Here is a 241-residue protein sequence, read N- to C-terminus: Large ribosomal subunit protein uL2 (241 aa).

The segment covering 1-12 (MGKRLISQRRGR) has biased composition (basic residues). 2 disordered regions span residues 1–21 (MGKRLISQRRGRGTPTYRSAS) and 200–241 (AVDH…GKRR).

Belongs to the universal ribosomal protein uL2 family. Part of the 50S ribosomal subunit. Forms a bridge to the 30S subunit in the 70S ribosome.

Its function is as follows. One of the primary rRNA binding proteins. Required for association of the 30S and 50S subunits to form the 70S ribosome, for tRNA binding and peptide bond formation. It has been suggested to have peptidyltransferase activity; this is somewhat controversial. Makes several contacts with the 16S rRNA in the 70S ribosome. In Methanothermobacter thermautotrophicus (strain ATCC 29096 / DSM 1053 / JCM 10044 / NBRC 100330 / Delta H) (Methanobacterium thermoautotrophicum), this protein is Large ribosomal subunit protein uL2.